Consider the following 687-residue polypeptide: Chloride channel protein ClC-Kb (687 aa).

Residues 1 to 50 (MEELVGLREGASKKPVPLQELWGPCPRIRRNIQGGLEWLKERLFRVGEDW) are Cytoplasmic-facing. The next 2 helical transmembrane spans lie at 51-82 (YFLV…KWLY) and 91-111 (LRYL…SGFS). Residues 116–127 (PSSGGSGIPEVK) constitute an intramembrane region (helical). Chloride is bound at residue S121. 2 helical membrane-spanning segments follow: residues 141–160 (IKNF…TGST) and 161–180 (IFLG…AAYL). The helical intramembrane region spans 203–224 (AGAAVGVATVFAAPISGVLFSI). A helical transmembrane segment spans residues 236–255 (YWRGFFAATCGAFMFHLLAV). Positions 259, 261, 278, and 281 each coordinate Ca(2+). Helical transmembrane passes span 282–310 (IFFF…LFFL) and 325–342 (PLYS…TYPP). The helical intramembrane region spans 349–360 (ASRLSMSEHLET). A run of 2 helical transmembrane segments spans residues 400-420 (GTLV…TTIP) and 421-440 (IPAG…GRLF). Residue F426 coordinates chloride. Residues 464–496 (GAYALAGAAAFSGAVTHTLSTALLAFEVTGQLV) constitute an intramembrane region (helical). Residues 500–520 (PVLMAVLAANAISQSFQPSFY) form a helical membrane-spanning segment. At 521-687 (DGTIIVKKLP…STLTNPPAPK (167 aa)) the chain is on the cytoplasmic side. 2 CBS domains span residues 551–609 (MNCA…EPAS) and 626–687 (CPTQ…PAPK).

The protein belongs to the chloride channel (TC 2.A.49) family. CLCNKB subfamily. As to quaternary structure, homodimer. Interacts with BSND. Post-translationally, N-glycosylated. In terms of tissue distribution, specifically expressed in the kidney, predominantly in the outer medulla and cortex. All nephron segments expressing BSND also express CLCNK proteins.

It localises to the basolateral cell membrane. It carries out the reaction chloride(in) = chloride(out). The catalysed reaction is iodide(out) = iodide(in). It catalyses the reaction nitrate(in) = nitrate(out). The enzyme catalyses bromide(in) = bromide(out). Functionally, anion-selective channel permeable to small monovalent anions with ion selectivity for chloride &gt; bromide &gt; nitrate &gt; iodide. Forms a homodimeric channel where each subunit has its own ion conduction pathway. May conduct double-barreled currents controlled by two types of gates, two fast gates that control each subunit independently and a slow common gate that opens and shuts off both subunits simultaneously. Assembles with the regulatory subunit BSND/Barttin for sorting at the basolateral plasma membrane domain and functional switch to the ion conducting state. CLCNKB:BSND channels display mostly a linear current-voltage relationship controlled by common gate. Mediates chloride conductance along nephron segments, namely the thick ascending limb of Henle's loop, convoluted tubule and the collecting duct, contributing to the maintenance of systemic acid-base and electrolyte homeostasis. Conducts chloride currents in the stria vascularis of the inner ear to establish the endocochlear potential necessary for normal hearing. This chain is Chloride channel protein ClC-Kb, found in Mus musculus (Mouse).